Consider the following 534-residue polypeptide: Ulvan lyase NLR42 (534 aa).

The signal sequence occupies residues 1–47 (MVFFKDLFIFKSLIKGSLYSGHMKKKLLNYLPLFALMLFTVSMMAQT). C59 and C89 are oxidised to a cystine. The Ca(2+) site is built by G63, N68, D86, T88, A91, and D92. Y164 provides a ligand contact to substrate. K169 functions as the Proton acceptor in the catalytic mechanism. Substrate-binding positions include 218-223 (SGAAGR) and 288-291 (YRVK). The active-site Proton donor/acceptor is the Y288. Residues 316 to 449 (PAADIYRIKN…SKWNLESTTL (134 aa)) are ulvan-binding domain. Positions 450 to 534 (SVDSQQIASV…KVYQTKLIVN (85 aa)) are cleaved as a propeptide — removed by the type IX secretion system (T9SS).

This sequence belongs to the polysaccharide lyase 28 family. The cofactor is Ca(2+).

The protein resides in the secreted. Its function is as follows. Ulvan lyase involved in ulvan degradation. Ulvan is the main polysaccharide component of the Ulvales (green seaweed) cell wall. It is composed of disaccharide building blocks comprising 3-sulfated rhamnose (Rha3S) linked to D-glucuronic acid (GlcA), L-iduronic acid (IduA), or D-xylose (Xyl). Ulvan lyase catalyzes the endolytic cleavage of the glycosidic bond between Rha3S and the uronic acids GlcA or IduA, producing oligosaccharides that have unsaturated 4-deoxy-L-threo-hex-4-enopyranosiduronic acid (deltaUA) at the non-reducing end. This results eventually in the degradation of the ulvan polysaccharide into deltaUA-Rha3S disaccharides and deltaUA-Rha3S-Xyl-Rha3S tetrasaccharides. The protein is Ulvan lyase NLR42 of Nonlabens ulvanivorans (Persicivirga ulvanivorans).